The sequence spans 86 residues: Small ribosomal subunit protein bS20 (86 aa).

Belongs to the bacterial ribosomal protein bS20 family.

Functionally, binds directly to 16S ribosomal RNA. The chain is Small ribosomal subunit protein bS20 from Exiguobacterium sibiricum (strain DSM 17290 / CCUG 55495 / CIP 109462 / JCM 13490 / 255-15).